The following is a 220-amino-acid chain: Protein CREG1 (220 aa).

The N-terminal stretch at 1–31 is a signal peptide; that stretch reads MAGLSRGSARALLAALLASTLLALLVSPARG. Residues N160, N193, and N216 are each glycosylated (N-linked (GlcNAc...) asparagine).

It belongs to the CREG family. As to quaternary structure, homodimer. Interacts with IGF2R; the interaction is dependent on glycosylation. Post-translationally, N-glycosylated.

The protein resides in the secreted. Its function is as follows. May contribute to the transcriptional control of cell growth and differentiation. Antagonizes transcriptional activation and cellular transformation by the adenovirus E1A protein. The transcriptional control activity of cell growth requires interaction with IGF2R. This chain is Protein CREG1 (CREG1), found in Homo sapiens (Human).